A 206-amino-acid polypeptide reads, in one-letter code: Two-component response regulator ORR7 (206 aa).

A disordered region spans residues 53-92 (VVPLHDNASAEDDDDDEEDDDEDDDDDDDEDDEEEAAPPY). A compositionally biased stretch (acidic residues) spans 61–88 (SAEDDDDDEEDDDEDDDDDDDEDDEEEA). Residues 92-205 (YVMAVDDSSV…DISRITSRML (114 aa)) enclose the Response regulatory domain. 4-aspartylphosphate is present on Asp138.

The protein belongs to the ARR family. Type-A subfamily. Post-translationally, two-component system major event consists of a His-to-Asp phosphorelay between a sensor histidine kinase (HK) and a response regulator (RR). In plants, the His-to-Asp phosphorelay involves an additional intermediate named Histidine-containing phosphotransfer protein (HPt). This multistep phosphorelay consists of a His-Asp-His-Asp sequential transfer of a phosphate group between first a His and an Asp of the HK protein, followed by the transfer to a conserved His of the HPt protein and finally the transfer to an Asp in the receiver domain of the RR protein. As to expression, expressed in flowers, and at low levels in roots, mature leaves and shoots.

Functions as a response regulator involved in His-to-Asp phosphorelay signal transduction system. Phosphorylation of the Asp residue in the receiver domain activates the ability of the protein to promote the transcription of target genes. Type-A response regulators seem to act as negative regulators of the cytokinin signaling. The sequence is that of Two-component response regulator ORR7 from Oryza sativa subsp. indica (Rice).